The sequence spans 150 residues: Lipoprotein signal peptidase (150 aa).

Helical transmembrane passes span 5 to 25, 59 to 79, and 82 to 102; these read LSLVIIVVGIIADQVFKNWVV, QQWFFLVLTPIVLIVALWFLW, and MGQNWYFAGLTLIIAGALGNF. Active-site residues include D113 and D129. Residues 124 to 144 traverse the membrane as a helical segment; that stretch reads IFNIADILLSVGFVVLFIAIL.

The protein belongs to the peptidase A8 family.

It localises to the cell membrane. The catalysed reaction is Release of signal peptides from bacterial membrane prolipoproteins. Hydrolyzes -Xaa-Yaa-Zaa-|-(S,diacylglyceryl)Cys-, in which Xaa is hydrophobic (preferably Leu), and Yaa (Ala or Ser) and Zaa (Gly or Ala) have small, neutral side chains.. It functions in the pathway protein modification; lipoprotein biosynthesis (signal peptide cleavage). Functionally, this protein specifically catalyzes the removal of signal peptides from prolipoproteins. The protein is Lipoprotein signal peptidase of Lactococcus lactis subsp. cremoris (strain SK11).